Consider the following 306-residue polypeptide: tRNA dimethylallyltransferase (306 aa).

G14–S21 serves as a coordination point for ATP. T16–S21 contributes to the substrate binding site. The interval D39–L42 is interaction with substrate tRNA.

Belongs to the IPP transferase family. Monomer. It depends on Mg(2+) as a cofactor.

The catalysed reaction is adenosine(37) in tRNA + dimethylallyl diphosphate = N(6)-dimethylallyladenosine(37) in tRNA + diphosphate. Its function is as follows. Catalyzes the transfer of a dimethylallyl group onto the adenine at position 37 in tRNAs that read codons beginning with uridine, leading to the formation of N6-(dimethylallyl)adenosine (i(6)A). The chain is tRNA dimethylallyltransferase from Synechococcus elongatus (strain ATCC 33912 / PCC 7942 / FACHB-805) (Anacystis nidulans R2).